A 241-amino-acid polypeptide reads, in one-letter code: MPTNGHKYSILMPTYNEKDNLPIIIWLIVKYMKASGLEYEVIVIDDGSPDGTLDVAKDLQKIYGEDKIVLRPRGSKLGLGTAYIHGIKHATGDFIVIIDADLSHHPKFIPEFIKLQQEGNYDIVSGTRYAGNGGVFGWDFKRKLISRGANFLSQVLLRPNASDLTGSFRLYKKDVLEKCIASCVSKGYVFQMEMLVRARQHGYTIAEVPITFVDRIYGTSKLGGTEIIQFAKNLLYLFATT.

The GDP-alpha-D-mannose site is built by Pro-13, Tyr-15, Glu-17, Ile-44, Asp-46, Asp-99, Ala-100, Asp-101, Arg-128, Arg-215, and Lys-221. Asp-101 lines the Mg(2+) pocket. Residue Asp-101 participates in Mn(2+) binding.

This sequence belongs to the glycosyltransferase 2 family. The cofactor is Mg(2+). It depends on Mn(2+) as a cofactor. Ca(2+) is required as a cofactor.

It localises to the endoplasmic reticulum. The catalysed reaction is a di-trans,poly-cis-dolichyl phosphate + GDP-alpha-D-mannose = a di-trans,poly-cis-dolichyl beta-D-mannosyl phosphate + GDP. It participates in protein modification; protein glycosylation. In terms of biological role, transfers mannose from GDP-mannose to dolichol monophosphate to form dolichol phosphate mannose (Dol-P-Man) which is the mannosyl donor in pathways leading to N-glycosylation, glycosyl phosphatidylinositol membrane anchoring, and O-mannosylation of proteins. This Drosophila melanogaster (Fruit fly) protein is Dolichol-phosphate mannosyltransferase subunit 1.